A 295-amino-acid chain; its full sequence is Nitrogenase iron protein (295 aa).

Position 11–18 (11–18 (GKGGIGKS)) interacts with ATP. Cys99 provides a ligand contact to [4Fe-4S] cluster. Arg102 carries the ADP-ribosylarginine; by dinitrogenase reductase ADP-ribosyltransferase modification. Position 133 (Cys133) interacts with [4Fe-4S] cluster.

The protein belongs to the NifH/BchL/ChlL family. Homodimer. [4Fe-4S] cluster is required as a cofactor. The reversible ADP-ribosylation of Arg-102 inactivates the nitrogenase reductase and regulates nitrogenase activity.

The enzyme catalyses N2 + 8 reduced [2Fe-2S]-[ferredoxin] + 16 ATP + 16 H2O = H2 + 8 oxidized [2Fe-2S]-[ferredoxin] + 2 NH4(+) + 16 ADP + 16 phosphate + 6 H(+). In terms of biological role, the key enzymatic reactions in nitrogen fixation are catalyzed by the nitrogenase complex, which has 2 components: the iron protein and the molybdenum-iron protein. The polypeptide is Nitrogenase iron protein (Zymomonas mobilis subsp. mobilis (strain ATCC 31821 / ZM4 / CP4)).